The chain runs to 262 residues: Protein BcsX (262 aa).

It participates in glycan metabolism; bacterial cellulose biosynthesis. In Komagataeibacter xylinus (Gluconacetobacter xylinus), this protein is Protein BcsX (bcsX).